An 89-amino-acid chain; its full sequence is Small ribosomal subunit protein bS18 (89 aa).

The protein belongs to the bacterial ribosomal protein bS18 family. Part of the 30S ribosomal subunit. Forms a tight heterodimer with protein bS6.

Binds as a heterodimer with protein bS6 to the central domain of the 16S rRNA, where it helps stabilize the platform of the 30S subunit. This chain is Small ribosomal subunit protein bS18, found in Treponema denticola (strain ATCC 35405 / DSM 14222 / CIP 103919 / JCM 8153 / KCTC 15104).